The primary structure comprises 88 residues: Co-chaperonin GroES (88 aa).

It belongs to the GroES chaperonin family. As to quaternary structure, heptamer of 7 subunits arranged in a ring. Interacts with the chaperonin GroEL.

The protein resides in the cytoplasm. Functionally, together with the chaperonin GroEL, plays an essential role in assisting protein folding. The GroEL-GroES system forms a nano-cage that allows encapsulation of the non-native substrate proteins and provides a physical environment optimized to promote and accelerate protein folding. GroES binds to the apical surface of the GroEL ring, thereby capping the opening of the GroEL channel. The polypeptide is Co-chaperonin GroES (Treponema denticola (strain ATCC 35405 / DSM 14222 / CIP 103919 / JCM 8153 / KCTC 15104)).